The following is a 228-amino-acid chain: uncharacterized protein (228 aa).

It is found in the mitochondrion. This is an uncharacterized protein from Emericella nidulans (Aspergillus nidulans).